The primary structure comprises 332 residues: Glycerol-3-phosphate dehydrogenase [NAD(P)+] (332 aa).

NADPH contacts are provided by W13, K34, and K108. K108, G136, and S138 together coordinate sn-glycerol 3-phosphate. A140 is a binding site for NADPH. 5 residues coordinate sn-glycerol 3-phosphate: K191, D244, S254, R255, and N256. K191 (proton acceptor) is an active-site residue. Residue R255 participates in NADPH binding. Residues V279 and E281 each contribute to the NADPH site.

This sequence belongs to the NAD-dependent glycerol-3-phosphate dehydrogenase family.

Its subcellular location is the cytoplasm. The enzyme catalyses sn-glycerol 3-phosphate + NAD(+) = dihydroxyacetone phosphate + NADH + H(+). It catalyses the reaction sn-glycerol 3-phosphate + NADP(+) = dihydroxyacetone phosphate + NADPH + H(+). It functions in the pathway membrane lipid metabolism; glycerophospholipid metabolism. Its function is as follows. Catalyzes the reduction of the glycolytic intermediate dihydroxyacetone phosphate (DHAP) to sn-glycerol 3-phosphate (G3P), the key precursor for phospholipid synthesis. This Francisella tularensis subsp. holarctica (strain FTNF002-00 / FTA) protein is Glycerol-3-phosphate dehydrogenase [NAD(P)+].